The primary structure comprises 329 residues: Lipoyl synthase (329 aa).

Positions 55, 60, 66, 81, 85, 88, and 292 each coordinate [4Fe-4S] cluster. Residues 67-281 (WEDREATFLI…KAEAEAIGFL (215 aa)) form the Radical SAM core domain.

This sequence belongs to the radical SAM superfamily. Lipoyl synthase family. Requires [4Fe-4S] cluster as cofactor.

Its subcellular location is the cytoplasm. It catalyses the reaction [[Fe-S] cluster scaffold protein carrying a second [4Fe-4S](2+) cluster] + N(6)-octanoyl-L-lysyl-[protein] + 2 oxidized [2Fe-2S]-[ferredoxin] + 2 S-adenosyl-L-methionine + 4 H(+) = [[Fe-S] cluster scaffold protein] + N(6)-[(R)-dihydrolipoyl]-L-lysyl-[protein] + 4 Fe(3+) + 2 hydrogen sulfide + 2 5'-deoxyadenosine + 2 L-methionine + 2 reduced [2Fe-2S]-[ferredoxin]. It functions in the pathway protein modification; protein lipoylation via endogenous pathway; protein N(6)-(lipoyl)lysine from octanoyl-[acyl-carrier-protein]: step 2/2. In terms of biological role, catalyzes the radical-mediated insertion of two sulfur atoms into the C-6 and C-8 positions of the octanoyl moiety bound to the lipoyl domains of lipoate-dependent enzymes, thereby converting the octanoylated domains into lipoylated derivatives. The sequence is that of Lipoyl synthase from Clavibacter sepedonicus (Clavibacter michiganensis subsp. sepedonicus).